The chain runs to 254 residues: Phosphoglycerate mutase 1 (254 aa).

Substrate contacts are provided by residues 10-17 (RHGESTWN) and 23-24 (SG). The active-site Tele-phosphohistidine intermediate is the H11. Phosphoserine occurs at positions 14 and 23. Y26 is subject to Phosphotyrosine. S31 bears the Phosphoserine mark. Substrate is bound by residues R62, 89 to 92 (ERHY), and K100. Catalysis depends on E89, which acts as the Proton donor/acceptor. K106 carries the N6-acetyllysine modification. Residue 116-117 (RR) participates in substrate binding. S118 is subject to Phosphoserine. Position 187–188 (187–188 (GN)) interacts with substrate. N6-acetyllysine; alternate is present on K251. N6-succinyllysine; alternate is present on K251. 2 positions are modified to N6-acetyllysine: K253 and K254.

This sequence belongs to the phosphoglycerate mutase family. BPG-dependent PGAM subfamily. As to quaternary structure, homodimer. Acetylated at Lys-253, Lys-253 and Lys-254 under high glucose condition. Acetylation increases catalytic activity. Under glucose restriction SIRT1 levels dramatically increase and it deacetylates the enzyme.

It carries out the reaction (2R)-2-phosphoglycerate = (2R)-3-phosphoglycerate. The enzyme catalyses (2R)-3-phospho-glyceroyl phosphate = (2R)-2,3-bisphosphoglycerate + H(+). In terms of biological role, catalyzes the interconversion of 2-phosphoglycerate and 3-phosphoglyceratea crucial step in glycolysis, by using 2,3-bisphosphoglycerate. Also catalyzes the interconversion of (2R)-2,3-bisphosphoglycerate and (2R)-3-phospho-glyceroyl phosphate. This chain is Phosphoglycerate mutase 1, found in Bos taurus (Bovine).